Reading from the N-terminus, the 430-residue chain is Serine--tRNA ligase (430 aa).

231 to 233 (TSE) provides a ligand contact to L-serine. Residue 262–264 (RSE) coordinates ATP. Glu285 provides a ligand contact to L-serine. 349-352 (EISS) serves as a coordination point for ATP. Ser385 contacts L-serine.

This sequence belongs to the class-II aminoacyl-tRNA synthetase family. Type-1 seryl-tRNA synthetase subfamily. In terms of assembly, homodimer. The tRNA molecule binds across the dimer.

Its subcellular location is the cytoplasm. It catalyses the reaction tRNA(Ser) + L-serine + ATP = L-seryl-tRNA(Ser) + AMP + diphosphate + H(+). The catalysed reaction is tRNA(Sec) + L-serine + ATP = L-seryl-tRNA(Sec) + AMP + diphosphate + H(+). It functions in the pathway aminoacyl-tRNA biosynthesis; selenocysteinyl-tRNA(Sec) biosynthesis; L-seryl-tRNA(Sec) from L-serine and tRNA(Sec): step 1/1. In terms of biological role, catalyzes the attachment of serine to tRNA(Ser). Is also able to aminoacylate tRNA(Sec) with serine, to form the misacylated tRNA L-seryl-tRNA(Sec), which will be further converted into selenocysteinyl-tRNA(Sec). The polypeptide is Serine--tRNA ligase (Jannaschia sp. (strain CCS1)).